Reading from the N-terminus, the 140-residue chain is Protein NrdI (140 aa).

This sequence belongs to the NrdI family.

In terms of biological role, probably involved in ribonucleotide reductase function. This Ruegeria sp. (strain TM1040) (Silicibacter sp.) protein is Protein NrdI.